The sequence spans 292 residues: Acetylglutamate kinase (292 aa).

Residues 64-65, Arg86, and Asn190 each bind substrate; that span reads GG.

The protein belongs to the acetylglutamate kinase family. ArgB subfamily.

The protein resides in the cytoplasm. The enzyme catalyses N-acetyl-L-glutamate + ATP = N-acetyl-L-glutamyl 5-phosphate + ADP. It functions in the pathway amino-acid biosynthesis; L-arginine biosynthesis; N(2)-acetyl-L-ornithine from L-glutamate: step 2/4. Catalyzes the ATP-dependent phosphorylation of N-acetyl-L-glutamate. This chain is Acetylglutamate kinase, found in Citrifermentans bemidjiense (strain ATCC BAA-1014 / DSM 16622 / JCM 12645 / Bem) (Geobacter bemidjiensis).